Reading from the N-terminus, the 249-residue chain is tRNA pseudouridine synthase A (249 aa).

D52 (nucleophile) is an active-site residue. Position 110 (Y110) interacts with substrate.

Belongs to the tRNA pseudouridine synthase TruA family. As to quaternary structure, homodimer.

The enzyme catalyses uridine(38/39/40) in tRNA = pseudouridine(38/39/40) in tRNA. Formation of pseudouridine at positions 38, 39 and 40 in the anticodon stem and loop of transfer RNAs. The sequence is that of tRNA pseudouridine synthase A from Azobacteroides pseudotrichonymphae genomovar. CFP2.